The primary structure comprises 175 residues: Outer membrane protein assembly factor BamE (175 aa).

The signal sequence occupies residues 1–21 (MQNTKLLLTSFTFVGLLALAG). Residue Cys-22 is the site of N-palmitoyl cysteine attachment. Cys-22 carries the S-diacylglycerol cysteine lipid modification. Disordered stretches follow at residues 117–147 (ALLGKDSGTNVTAPAQEAEKPKSEVPAKPGS) and 156–175 (IDNVETVPVPTPEPLDTSPQ).

Belongs to the BamE family. Part of the Bam complex.

It is found in the cell outer membrane. Its function is as follows. Part of the outer membrane protein assembly complex, which is involved in assembly and insertion of beta-barrel proteins into the outer membrane. May have a structural role in maintaining the cell envelope integrity. This chain is Outer membrane protein assembly factor BamE, found in Pseudomonas fluorescens.